We begin with the raw amino-acid sequence, 279 residues long: NADPH-dependent 7-cyano-7-deazaguanine reductase (279 aa).

Residue 86-88 (IES) participates in substrate binding. Residue 88 to 89 (SK) participates in NADPH binding. Cys186 (thioimide intermediate) is an active-site residue. Asp193 acts as the Proton donor in catalysis. Substrate is bound at residue 225-226 (HE). 254–255 (RG) is a binding site for NADPH.

This sequence belongs to the GTP cyclohydrolase I family. QueF type 2 subfamily. Homodimer.

The protein localises to the cytoplasm. It carries out the reaction 7-aminomethyl-7-carbaguanine + 2 NADP(+) = 7-cyano-7-deazaguanine + 2 NADPH + 3 H(+). Its pathway is tRNA modification; tRNA-queuosine biosynthesis. Functionally, catalyzes the NADPH-dependent reduction of 7-cyano-7-deazaguanine (preQ0) to 7-aminomethyl-7-deazaguanine (preQ1). This chain is NADPH-dependent 7-cyano-7-deazaguanine reductase, found in Chromobacterium violaceum (strain ATCC 12472 / DSM 30191 / JCM 1249 / CCUG 213 / NBRC 12614 / NCIMB 9131 / NCTC 9757 / MK).